Reading from the N-terminus, the 388-residue chain is tRNA-specific adenosine deaminase 1 (388 aa).

An A to I editase domain is found at 63–388 (CLATGVKCTP…PNGGNEFQWI (326 aa)). His-89 provides a ligand contact to Zn(2+). The active-site Proton donor is Glu-91. Arg-96 is a 1D-myo-inositol hexakisphosphate binding site. Zn(2+) contacts are provided by Cys-144 and Cys-201. 3 residues coordinate 1D-myo-inositol hexakisphosphate: Lys-204, Lys-357, and Arg-363.

It belongs to the ADAT1 family. It depends on 1D-myo-inositol hexakisphosphate as a cofactor. The cofactor is Zn(2+).

It is found in the cytoplasm. It localises to the nucleus. The catalysed reaction is adenosine(37) in tRNA(Ala) + H2O + H(+) = inosine(37) in tRNA(Ala) + NH4(+). Deaminates adenosine-37 to inosine in tRNA-Ala. The protein is tRNA-specific adenosine deaminase 1 of Schizosaccharomyces pombe (strain 972 / ATCC 24843) (Fission yeast).